The sequence spans 182 residues: MAQKERSERDERESEFVDRLVHINRVAKVVKGGRRFGFAALVVVGDQKGRVGFGHGKAREVPEAVRKATESAKRGMIYVPLRSGRTLHHDLEGHHGAGRVLLRSASAGTGIIAGGPMRAIFETLGMQDVVAKSLGSSNPYNMVRATFDALKRQMHPRDIAAQRGIKYSTLQARRQHLVDAEG.

The 64-residue stretch at 16–79 (FVDRLVHINR…ESAKRGMIYV (64 aa)) folds into the S5 DRBM domain.

This sequence belongs to the universal ribosomal protein uS5 family. As to quaternary structure, part of the 30S ribosomal subunit. Contacts proteins S4 and S8.

Functionally, with S4 and S12 plays an important role in translational accuracy. Located at the back of the 30S subunit body where it stabilizes the conformation of the head with respect to the body. This Bartonella henselae (strain ATCC 49882 / DSM 28221 / CCUG 30454 / Houston 1) (Rochalimaea henselae) protein is Small ribosomal subunit protein uS5.